The primary structure comprises 143 residues: S-adenosylmethionine decarboxylase proenzyme (143 aa).

Catalysis depends on S66, which acts as the Schiff-base intermediate with substrate; via pyruvic acid. At S66 the chain carries Pyruvic acid (Ser); by autocatalysis. H71 acts as the Proton acceptor; for processing activity in catalysis. Catalysis depends on C86, which acts as the Proton donor; for catalytic activity.

Belongs to the prokaryotic AdoMetDC family. Type 1 subfamily. In terms of assembly, heterotetramer of two alpha and two beta chains arranged as a dimer of alpha/beta heterodimers. It depends on pyruvate as a cofactor. Post-translationally, is synthesized initially as an inactive proenzyme. Formation of the active enzyme involves a self-maturation process in which the active site pyruvoyl group is generated from an internal serine residue via an autocatalytic post-translational modification. Two non-identical subunits are generated from the proenzyme in this reaction, and the pyruvate is formed at the N-terminus of the alpha chain, which is derived from the carboxyl end of the proenzyme. The post-translation cleavage follows an unusual pathway, termed non-hydrolytic serinolysis, in which the side chain hydroxyl group of the serine supplies its oxygen atom to form the C-terminus of the beta chain, while the remainder of the serine residue undergoes an oxidative deamination to produce ammonia and the pyruvoyl group blocking the N-terminus of the alpha chain.

It carries out the reaction S-adenosyl-L-methionine + H(+) = S-adenosyl 3-(methylsulfanyl)propylamine + CO2. It functions in the pathway amine and polyamine biosynthesis; S-adenosylmethioninamine biosynthesis; S-adenosylmethioninamine from S-adenosyl-L-methionine: step 1/1. In terms of biological role, catalyzes the decarboxylation of S-adenosylmethionine to S-adenosylmethioninamine (dcAdoMet), the propylamine donor required for the synthesis of the polyamines spermine and spermidine from the diamine putrescine. In Thermococcus gammatolerans (strain DSM 15229 / JCM 11827 / EJ3), this protein is S-adenosylmethionine decarboxylase proenzyme.